A 143-amino-acid chain; its full sequence is Transcriptional regulator MraZ (143 aa).

2 consecutive SpoVT-AbrB domains span residues 5–47 (EYHH…PIEE) and 76–119 (AMES…SAER).

It belongs to the MraZ family. In terms of assembly, forms oligomers.

Its subcellular location is the cytoplasm. It is found in the nucleoid. This Lactobacillus johnsonii (strain CNCM I-12250 / La1 / NCC 533) protein is Transcriptional regulator MraZ.